The primary structure comprises 1013 residues: AP-2 complex subunit alpha-2 (1013 aa).

HEAT repeat units lie at residues Ala-254 to Asn-289, Asp-354 to Ala-391, Asp-393 to Trp-430, and Thr-521 to Val-565. A disordered region spans residues Ser-652 to Thr-676. Residues Ser-663 to Gln-675 are compositionally biased toward polar residues. In terms of domain architecture, GAE spans Ala-742–Asn-841. Residues Gly-760–Leu-1013 are required for AP180 binding.

This sequence belongs to the adaptor complexes large subunit family. As to quaternary structure, adaptor protein complex 2 (AP-2) is a heterotetramer composed of two large adaptins (alpha-type and beta-type subunits), a medium adaptin (mu-type subunit) and a small adaptin (sigma-type subunit). Interacts with AP180.

The protein resides in the membrane. It localises to the coated pit. Subunit of the adaptor protein complex 2 (AP-2). Adaptor protein complexes function in protein transport via transport vesicles in different membrane traffic pathways. Adaptor protein complexes are vesicle coat components and appear to be involved in cargo selection and vesicle formation. AP-2 is involved in clathrin-dependent endocytosis in which cargo proteins are incorporated into vesicles surrounded by clathrin (clathrin-coated vesicles, CCVs) which are destined for fusion with the early endosome. The complex binds polyphosphoinositides. The chain is AP-2 complex subunit alpha-2 (ALPHAC-AD) from Arabidopsis thaliana (Mouse-ear cress).